The primary structure comprises 37 residues: Cytochrome b6-f complex subunit 5 (37 aa).

The helical transmembrane segment at 5 to 25 threads the bilayer; sequence LLSGIVLGLVPVTITGLFVAA.

This sequence belongs to the PetG family. The 4 large subunits of the cytochrome b6-f complex are cytochrome b6, subunit IV (17 kDa polypeptide, PetD), cytochrome f and the Rieske protein, while the 4 small subunits are PetG, PetL, PetM and PetN. The complex functions as a dimer.

Its subcellular location is the plastid. It localises to the chloroplast thylakoid membrane. Its function is as follows. Component of the cytochrome b6-f complex, which mediates electron transfer between photosystem II (PSII) and photosystem I (PSI), cyclic electron flow around PSI, and state transitions. PetG is required for either the stability or assembly of the cytochrome b6-f complex. In Emiliania huxleyi (Coccolithophore), this protein is Cytochrome b6-f complex subunit 5.